Here is a 37-residue protein sequence, read N- to C-terminus: Bactericidin B-3 (37 aa).

Gly37 carries the post-translational modification Glycine amide.

It belongs to the cecropin family.

It localises to the secreted. Functionally, cecropins have lytic and antibacterial activity against several Gram-positive and Gram-negative bacteria. This Manduca sexta (Tobacco hawkmoth) protein is Bactericidin B-3.